Consider the following 512-residue polypeptide: 2,3-bisphosphoglycerate-independent phosphoglycerate mutase (512 aa).

The Mn(2+) site is built by Asp-11 and Ser-61. The active-site Phosphoserine intermediate is the Ser-61. Substrate contacts are provided by residues His-122, 152–153 (RD), Arg-184, Arg-190, 259–262 (RADR), and Lys-332. Mn(2+)-binding residues include Asp-399, His-403, Asp-440, His-441, and His-459.

It belongs to the BPG-independent phosphoglycerate mutase family. As to quaternary structure, monomer. The cofactor is Mn(2+).

The enzyme catalyses (2R)-2-phosphoglycerate = (2R)-3-phosphoglycerate. Its pathway is carbohydrate degradation; glycolysis; pyruvate from D-glyceraldehyde 3-phosphate: step 3/5. Its function is as follows. Catalyzes the interconversion of 2-phosphoglycerate and 3-phosphoglycerate. This Francisella tularensis subsp. tularensis (strain FSC 198) protein is 2,3-bisphosphoglycerate-independent phosphoglycerate mutase.